The primary structure comprises 212 residues: Chloramphenicol acetyltransferase (212 aa).

His-186 serves as the catalytic Proton acceptor.

Belongs to the chloramphenicol acetyltransferase family. As to quaternary structure, homotrimer.

The enzyme catalyses chloramphenicol + acetyl-CoA = chloramphenicol 3-acetate + CoA. This enzyme is an effector of chloramphenicol resistance in bacteria. The polypeptide is Chloramphenicol acetyltransferase (catD) (Clostridioides difficile (Peptoclostridium difficile)).